Consider the following 275-residue polypeptide: Large ribosomal subunit protein uL2c (275 aa).

The segment at 222 to 258 (GSAMNPVDHPHGGGEGRAPIGRARPVSPWGRPALGAK) is disordered.

The protein belongs to the universal ribosomal protein uL2 family. As to quaternary structure, part of the 50S ribosomal subunit.

It is found in the plastid. The protein localises to the chloroplast. The protein is Large ribosomal subunit protein uL2c (rpl2) of Chlorella vulgaris (Green alga).